A 564-amino-acid polypeptide reads, in one-letter code: 5-hydroxytryptamine receptor 1 (564 aa).

The disordered stretch occupies residues 1 to 26 (MALSGQDWRRHQSHRQHRNHRTQGNH). Basic residues predominate over residues 11–23 (HQSHRQHRNHRTQ). A helical transmembrane segment spans residues 29-51 (LISTATLTLFVLFLSSWIAYAAG). 9 consecutive repeat copies span residues 89 to 90 (GS), 91 to 92 (GS), 93 to 94 (GS), 95 to 96 (GS), 97 to 98 (GS), 99 to 100 (GS), 101 to 102 (GS), 103 to 104 (GS), and 105 to 106 (GS). The 9 X 2 AA tandem repeats of G-S stretch occupies residues 89–106 (GSGSGSGSGSGSGSGSGS). The helical transmembrane segment at 165–188 (VSIVLLIVILGTVVGNVLVCIAVC) threads the bilayer. Residues 189–198 (MVRKLRRPCN) lie on the Cytoplasmic side of the membrane. Residues 199–222 (YLLVSLALSDLCVALLVMPMALLY) traverse the membrane as a helical segment. The Extracellular segment spans residues 223 to 236 (EVLEKWNFGPLLCD). A disulfide bridge links Cys235 with Cys314. A helical transmembrane segment spans residues 237-258 (IWVSFDVLCCTASILNLCAISV). Residues 238–247 (WVSFDVLCCT) form an agonist binding region. Residues Asp242 and Thr247 each contribute to the ergotamine site. The short motif at 259 to 261 (DRY) is the DRY motif; important for ligand-induced conformation changes element. Topologically, residues 259-278 (DRYLAITKPLEYGVKRTPRR) are cytoplasmic. The chain crosses the membrane as a helical span at residues 279–302 (MMLCVGIVWLAAACISLPPLLILG). Topologically, residues 303 to 330 (NEHEDEEGQPICTVCQNFAYQIYATLGS) are extracellular. The chain crosses the membrane as a helical span at residues 331–353 (FYIPLSVMLFVYYQIFRAARRIV). Residues 354–454 (LEEKRAQTHL…QLAKEKKAST (101 aa)) lie on the Cytoplasmic side of the membrane. Residues 367–396 (LNGTGSPSAPQAPPLGHTELASSGNGQRHS) are disordered. Residues 386–396 (LASSGNGQRHS) show a composition bias toward polar residues. The helical transmembrane segment at 455 to 476 (TLGIIMSAFTVCWLPFFILALI) threads the bilayer. At 477–487 (RPFETMHVPAS) the chain is on the extracellular side. A helical transmembrane segment spans residues 488-510 (LSSLFLWLGYANSLLNPIIYATL). Positions 503–507 (NPIIY) match the NPxxY motif; important for ligand-induced conformation changes and signaling motif. Residues 511–564 (NRDFRKPFQEILYFRCSSLNTMMRENYYQDQYGEPPSQRVMLGDERHGARESFL) are Cytoplasmic-facing.

The protein belongs to the G-protein coupled receptor 1 family. 5-hydroxytryptamine receptor subfamily. As to expression, expressed predominantly in adult heads.

The protein resides in the cell membrane. G-protein coupled receptor for 5-hydroxytryptamine (serotonin). Also functions as a receptor for various alkaloids. Ligand binding causes a conformation change that triggers signaling via guanine nucleotide-binding proteins (G proteins) and modulates the activity of down-stream effectors, such as adenylate cyclase. Signaling activates adenylate cyclase activity. This is 5-hydroxytryptamine receptor 1 (5-HT7) from Drosophila melanogaster (Fruit fly).